We begin with the raw amino-acid sequence, 3419 residues long: Genome polyprotein (3419 aa).

The disordered stretch occupies residues 1–25; the sequence is MKNPKEEIRRIRIVNMLKRGVARVN. At 1–104 the chain is on the cytoplasmic side; it reads MKNPKEEIRR…INARKERKRR (104 aa). The interval 37 to 72 is hydrophobic; homodimerization of capsid protein C; that stretch reads LLLGHGPIRMVLAILAFLRFTAIKPSLGLINRWGSV. The propeptide at 105–122 is ER anchor for capsid protein C, removed in mature form by serine protease NS3; it reads GADTSIGIIGLLLTTAMA. The chain crosses the membrane as a helical span at residues 105–125; sequence GADTSIGIIGLLLTTAMAAEI. At 126–249 the chain is on the extracellular side; it reads TRRGSAYYMY…YTKHLIKVEN (124 aa). Asparagine 192 carries N-linked (GlcNAc...) asparagine; by host glycosylation. A helical membrane pass occupies residues 250 to 269; it reads WIFRNPGFALVAVAIAWLLG. Residues 270-274 lie on the Cytoplasmic side of the membrane; sequence SSTSQ. A helical transmembrane segment spans residues 275–290; the sequence is KVIYLVMILLIAPAYS. The Extracellular portion of the chain corresponds to 291–741; that stretch reads IRCIGVSNRD…HQIFGAAFKS (451 aa). Cysteines 293 and 320 form a disulfide. Lysine 328 is covalently cross-linked (Glycyl lysine isopeptide (Lys-Gly) (interchain with G-Cter in ubiquitin)). Cystine bridges form between cysteine 350–cysteine 406, cysteine 350–cysteine 411, cysteine 364–cysteine 395, cysteine 382–cysteine 406, cysteine 382–cysteine 411, cysteine 476–cysteine 577, and cysteine 594–cysteine 625. Residues 388-401 are fusion peptide; it reads DRGWGNGCGLFGKG. Residue lysine 567 forms a Glycyl lysine isopeptide (Lys-Gly) (interchain with G-Cter in ubiquitin) linkage. The chain crosses the membrane as a helical span at residues 742–763; the sequence is LFGGMSWFSQILIGTLLVWLGL. Residues 764–769 lie on the Cytoplasmic side of the membrane; it reads NTKNGS. Residues 770-790 traverse the membrane as a helical segment; sequence ISLTCLALGGVMIFLSTAVSA. The Lumenal segment spans residues 791–1173; the sequence is DVGCSVDFSK…EGLKKRMTTK (383 aa). Intrachain disulfides connect cysteine 794-cysteine 805, cysteine 845-cysteine 933, cysteine 969-cysteine 1013, cysteine 1070-cysteine 1119, cysteine 1081-cysteine 1102, and cysteine 1103-cysteine 1106. N-linked (GlcNAc...) asparagine; by host glycans are attached at residues asparagine 920 and asparagine 997. Residues 1174–1194 traverse the membrane as a helical segment; that stretch reads IIMSTSMAVLVVMILGGFSMS. The Cytoplasmic segment spans residues 1195 to 1216; sequence DLAKLVILMGATFAEMNTGGDV. A helical transmembrane segment spans residues 1217–1237; the sequence is AHLALVAAFKVRPALLVSFIF. The Lumenal segment spans residues 1238–1266; that stretch reads RANWTPRESMLLALASCLLQTAISALEGD. The helical transmembrane segment at 1267 to 1287 threads the bilayer; the sequence is LMVLINGFALAWLAIRAMAVP. The Cytoplasmic segment spans residues 1288–1291; that stretch reads RTDN. The helical transmembrane segment at 1292–1312 threads the bilayer; sequence IALPILAALTPLARGTLLVAW. Residues 1313-1341 lie on the Lumenal side of the membrane; it reads RAGLATCGGIMLLSLKGKGSVKKNLPFVM. The chain crosses the membrane as a helical span at residues 1342 to 1362; sequence ALGLTAVRVVDPINVVGLLLL. Topologically, residues 1363–1369 are cytoplasmic; the sequence is TRSGKRS. Residues 1370-1390 traverse the membrane as a helical segment; it reads WPPSEVLTAVGLICALAGGFA. The Lumenal portion of the chain corresponds to 1391-1393; it reads KAD. The chain crosses the membrane as a helical span at residues 1394-1414; it reads IEMAGPMAAVGLLIVSYVVSG. Residues 1415–1468 are Cytoplasmic-facing; that stretch reads KSVDMYIERAGDITWEKDAEVTGNSPRLDVALDESGDFSLVEEDGPPMREIILK. Positions 1421-1460 are interacts with and activates NS3 protease; it reads IERAGDITWEKDAEVTGNSPRLDVALDESGDFSLVEEDGP. A disordered region spans residues 1425–1447; the sequence is GDITWEKDAEVTGNSPRLDVALD. The segment at residues 1469–1489 is an intramembrane region (helical); it reads VVLMAICGMNPIAIPFAAGAW. Over 1490 to 2166 the chain is Lumenal; the sequence is YVYVKTGKRS…KAAAAQLPET (677 aa). The Peptidase S7 domain maps to 1499 to 1676; that stretch reads SGALWDVPAP…KREEETPVEC (178 aa). Residues histidine 1549, aspartate 1573, and serine 1633 each act as charge relay system; for serine protease NS3 activity in the active site. The region spanning 1679–1835 is the Helicase ATP-binding domain; the sequence is PSMLKKKQLT…DSNSPIMDTE (157 aa). An important for RNA-binding region spans residues 1683–1686; that stretch reads KKKQ. 1692–1699 contributes to the ATP binding site; sequence LHPGAGKT. Residues 1783–1786 carry the DEAH box motif; sequence DEAH. The 180-residue stretch at 1830 to 2009 folds into the Helicase C-terminal domain; it reads PIMDTEVEVP…GLIASLYRPE (180 aa). Lysine 1887 carries the post-translational modification N6-acetyllysine; by host. Residues 2167-2187 form a helical membrane-spanning segment; it reads LETIMLLGLLGTVSLGIFFVL. Residues 2188–2191 lie on the Lumenal side of the membrane; sequence MRNK. Positions 2192–2212 form an intramembrane region, helical; sequence GIGKMGFGMVTLGASAWLMWL. Topologically, residues 2213–2214 are cytoplasmic; it reads SE. A helical transmembrane segment spans residues 2215-2235; that stretch reads IEPARIACVLIVVFLLLVVLI. At 2236–2250 the chain is on the lumenal side; that stretch reads PEPEKQRSPQDNQMA. Residues 2251-2265 constitute an intramembrane region (helical); the sequence is IIIMVAVGLLGLITA. At 2266–2303 the chain is on the lumenal side; the sequence is NELGWLERTKNDIAHLMGRREEGATMGFSMDIDLRPAS. The segment at residues 2304–2324 is an intramembrane region (helical); the sequence is AWAIYAALTTLITPAVQHAVT. Topologically, residues 2325–2340 are lumenal; the sequence is TSYNNYSLMAMATQAG. Residues 2341–2361 form a helical membrane-spanning segment; it reads VLFGMGKGMPFMHGDLGVPLL. Residues 2362–2371 are Cytoplasmic-facing; it reads MMGCYSQLTP. Residues 2372 to 2392 traverse the membrane as a helical segment; that stretch reads LTLIVAIILLVAHYMYLIPGL. Topologically, residues 2393–2437 are lumenal; sequence QAAAARAAQKRTAAGIMKNPVVDGIVVTDIDTMTIDPQVEKKMGQ. The helical transmembrane segment at 2438–2458 threads the bilayer; that stretch reads VLLIAVAISSAVLLRTAWGWG. Residues 2459 to 3419 are Cytoplasmic-facing; it reads EAGALITAAT…GEEGSTPGVL (961 aa). An mRNA cap 0-1 NS5-type MT domain is found at 2517–2781; the sequence is GGGTGETLGE…DVNLGSGTRA (265 aa). Residues lysine 2529, leucine 2532, asparagine 2533, methionine 2535, phenylalanine 2540, and lysine 2544 each contribute to the mRNA site. 2529-2535 lines the GTP pocket; sequence KARLNQM. Residue serine 2572 coordinates S-adenosyl-L-methionine. Phosphoserine is present on serine 2572. The For 2'-O-MTase activity role is filled by lysine 2577. The tract at residues 2593–2596 is SUMO-interacting motif (SIM); the sequence is VVDL. S-adenosyl-L-methionine contacts are provided by glycine 2602, tryptophan 2603, threonine 2620, lysine 2621, histidine 2626, glutamate 2627, aspartate 2647, valine 2648, aspartate 2662, and isoleucine 2663. Aspartate 2662 (for 2'-O-MTase activity) is an active-site residue. 2665–2671 is a binding site for GTP; that stretch reads ESSSSPE. Serine 2666 is an mRNA binding site. Lysine 2698 functions as the For 2'-O-MTase activity in the catalytic mechanism. Arginine 2729 and serine 2731 together coordinate mRNA. 2729-2731 is a binding site for GTP; it reads RNS. Catalysis depends on glutamate 2734, which acts as the For 2'-O-MTase activity. Position 2736 (tyrosine 2736) interacts with S-adenosyl-L-methionine. The Nuclear localization signal (NLS) signature appears at 2904-2910; it reads KRKRPRV. Residues glutamate 2955, histidine 2959, cysteine 2964, and cysteine 2967 each coordinate Zn(2+). Residues 3045-3195 form the RdRp catalytic domain; the sequence is GKMYADDTAG…KPIDDRFAHA (151 aa). Residues histidine 3230, cysteine 3246, and cysteine 3365 each contribute to the Zn(2+) site.

This sequence in the N-terminal section; belongs to the class I-like SAM-binding methyltransferase superfamily. mRNA cap 0-1 NS5-type methyltransferase family. Homodimer. Interacts with host SERTAD3; this interaction promotes capsid protein C degradation. Interacts with host CAPRIN1; this interaction is probably linked to the inhibition of stress granules formation by the virus. Interacts with host G3BP1; this interaction is probably linked to the inhibition of stress granules formation by the virus. As to quaternary structure, forms heterodimers with envelope protein E in the endoplasmic reticulum and Golgi. Interacts with non-structural protein 2A. In terms of assembly, homodimer; in the endoplasmic reticulum and Golgi. Interacts with host TYRO3, AXL and DC-SIGN proteins. Interacts with non-structural protein 2A. Interacts with host HAVCR1; this interaction likely mediates virus attachment to host cell. Interacts with host NCAM1. Interacts with host HSPA5. Interacts with Aedes aegypti SRPN25, APY and venom allergen-1 salivary proteins; the interactions do not affect Zika virus replication in human endothelial cells and keratinocytes. Homodimer; Homohexamer when secreted. Interacts with host TBK1. Interacts with host USP8. Interacts with envelope protein E. Interacts with host HSPA5. As to quaternary structure, interacts with the structural protein prM/E complex, and the NS2B/NS3 protease complex. In terms of assembly, forms a heterodimer with serine protease NS3. May form homooligomers. Interacts with human SPCS1. Interacts with non-structural protein 2A. Forms a heterodimer with NS2B. Interacts with NS4B. Interacts with unphosphorylated RNA-directed RNA polymerase NS5; this interaction stimulates RNA-directed RNA polymerase NS5 guanylyltransferase activity. Interacts with non-structural protein 2A. Interacts with host SHFL; this interaction promotes NS3 degradation via a lysosome-dependent pathway. Interacts with host CEP63; this interaction disorganizes the centrosome and inhibits host innate immune response. As to quaternary structure, may interact with host ANKLE2; the interaction may cause defects in brain development, such as microcephaly. May interact with host SRPRA and SEC61G. In terms of assembly, interacts with serine protease NS3. Interacts with NS1. Interacts with host TBK1. Homodimer. Interacts with host STAT2; this interaction inhibits the phosphorylation of the latter, and, when all viral proteins are present (polyprotein), targets STAT2 for degradation. Interacts with host TBK1 and IKBKE; these interactions lead to the inhibition of the host RIG-I signaling pathway. Interacts with host KPNA2. Interacts with host PAF1 complex; the interaction may prevent the recruitment of the host PAF1 complex to interferon-responsive genes, and thus reduces the immune response. Interacts with serine protease NS3. Interacts with host ZSWIM8; this interaction allows STAT2 binding to ZSWIM8 and subsequent proteasomal degradation leading to inhibition of interferon signaling. Specific enzymatic cleavages in vivo yield mature proteins. Cleavages in the lumen of endoplasmic reticulum are performed by host signal peptidase, whereas cleavages in the cytoplasmic side are performed by serine protease NS3. Signal cleavage at the 2K-4B site requires a prior NS3 protease-mediated cleavage at the 4A-2K site. Post-translationally, cleaved in post-Golgi vesicles by a host furin, releasing the mature small envelope protein M, and peptide pr. This cleavage is incomplete as up to 30% of viral particles still carry uncleaved prM. In terms of processing, N-glycosylation plays a role in virulence in mammalian and mosquito hosts, but may have no effect on neurovirulence. Ubiquitination by host TRIM7 promotes virus attachment and fusion of the virus and the host endosome membrane. Post-translationally, N-glycosylated. The excreted form is glycosylated, which is required for efficient secretion of the protein from infected cells. In terms of processing, acetylated by host KAT5. Acetylation modulates NS3 RNA-binding and unwinding activities and plays an important positive role for viral replication. Phosphorylated on serines residues. This phosphorylation may trigger NS5 nuclear localization. Post-translationally, sumoylated, required for regulating IFN induced interferon stimulated genes/ISGs.

The protein resides in the virion. It localises to the host nucleus. Its subcellular location is the host cytoplasm. It is found in the host perinuclear region. The protein localises to the secreted. The protein resides in the virion membrane. It localises to the host endoplasmic reticulum membrane. It catalyses the reaction Selective hydrolysis of -Xaa-Xaa-|-Yaa- bonds in which each of the Xaa can be either Arg or Lys and Yaa can be either Ser or Ala.. It carries out the reaction RNA(n) + a ribonucleoside 5'-triphosphate = RNA(n+1) + diphosphate. The enzyme catalyses a ribonucleoside 5'-triphosphate + H2O = a ribonucleoside 5'-diphosphate + phosphate + H(+). The catalysed reaction is ATP + H2O = ADP + phosphate + H(+). It catalyses the reaction a 5'-end (5'-triphosphoguanosine)-ribonucleoside in mRNA + S-adenosyl-L-methionine = a 5'-end (N(7)-methyl 5'-triphosphoguanosine)-ribonucleoside in mRNA + S-adenosyl-L-homocysteine. It carries out the reaction a 5'-end (N(7)-methyl 5'-triphosphoguanosine)-ribonucleoside in mRNA + S-adenosyl-L-methionine = a 5'-end (N(7)-methyl 5'-triphosphoguanosine)-(2'-O-methyl-ribonucleoside) in mRNA + S-adenosyl-L-homocysteine + H(+). Plays a role in virus budding by binding to the host cell membrane and packages the viral RNA into a nucleocapsid that forms the core of the mature virus particle. During virus entry, may induce genome penetration into the host cytoplasm after hemifusion induced by the surface proteins. Can migrate to the cell nucleus where it modulates host functions. Inhibits the integrated stress response (ISR) in the infected cell. Its function is as follows. Inhibits RNA silencing by interfering with host Dicer. Functionally, prevents premature fusion activity of envelope proteins in trans-Golgi by binding to envelope protein E at pH 6.0. After virion release in extracellular space, gets dissociated from E dimers. In terms of biological role, plays a role in host immune defense modulation and protection of envelope protein E during virion synthesis. PrM-E cleavage is inefficient, many virions are only partially matured and immature prM-E proteins could play a role in immune evasion. Contributes to fetal microcephaly in humans. Acts as a chaperone for envelope protein E during intracellular virion assembly by masking and inactivating envelope protein E fusion peptide. prM is the only viral peptide matured by host furin in the trans-Golgi network probably to avoid catastrophic activation of the viral fusion activity in acidic Golgi compartment prior to virion release. May play a role in virus budding. Exerts cytotoxic effects by activating a mitochondrial apoptotic pathway through M ectodomain. May display a viroporin activity. Its function is as follows. Binds to host cell surface receptors and mediates fusion between viral and cellular membranes. Efficient virus attachment to cell is, at least in part, mediated by host HAVCR1 in a cell-type specific manner. In addition, host NCAM1 can also be used as entry receptor. Interaction with host HSPA5 plays an important role in the early stages of infection as well. Envelope protein is synthesized in the endoplasmic reticulum and forms a heterodimer with protein prM. The heterodimer plays a role in virion budding in the ER, and the newly formed immature particle is covered with 60 spikes composed of heterodimers between precursor prM and envelope protein E. The virion is transported to the Golgi apparatus where the low pH causes the dissociation of PrM-E heterodimers and formation of E homodimers. PrM-E cleavage is inefficient, many virions are only partially matured and immature prM-E proteins could play a role in immune evasion. Functionally, plays a role in the inhibition of host RLR-induced interferon-beta activation by targeting TANK-binding kinase 1/TBK1. In addition, recruits the host deubiquitinase USP8 to cleave 'Lys-11'-linked polyubiquitin chains from caspase-1/CASP1 thus inhibiting its proteasomal degradation. In turn, stabilized CASP1 promotes cleavage of cGAS, which inhibits its ability to recognize mitochondrial DNA release and initiate type I interferon signaling. In terms of biological role, component of the viral RNA replication complex that recruits genomic RNA, the structural protein prM/E complex, and the NS2B/NS3 protease complex to the virion assembly site and orchestrates virus morphogenesis. Antagonizes also the host MDA5-mediated induction of alpha/beta interferon antiviral response. May disrupt adherens junction formation and thereby impair proliferation of radial cells in the host cortex. Required cofactor for the serine protease function of NS3. Its function is as follows. Displays three enzymatic activities: serine protease, NTPase and RNA helicase. NS3 serine protease, in association with NS2B, performs its autocleavage and cleaves the polyprotein at dibasic sites in the cytoplasm: C-prM, NS2A-NS2B, NS2B-NS3, NS3-NS4A, NS4A-2K and NS4B-NS5. NS3 RNA helicase binds RNA and unwinds dsRNA in the 3' to 5' direction. Leads to translation arrest when expressed ex vivo. Disrupts host centrosome organization in a CEP63-dependent manner to degrade host TBK1 and inhibits innate immune response. Inhibits the integrated stress response (ISR) in the infected cell. Functionally, regulates the ATPase activity of the NS3 helicase activity. NS4A allows NS3 helicase to conserve energy during unwinding. Cooperatively with NS4B suppresses the Akt-mTOR pathway and leads to cellular dysregulation. By inhibiting host ANKLE2 functions, may cause defects in brain development, such as microcephaly. Also antagonizes the host MDA5-mediated induction of alpha/beta interferon antiviral response. Inhibits the integrated stress response (ISR) in the infected cell. In terms of biological role, functions as a signal peptide for NS4B and is required for the interferon antagonism activity of the latter. Induces the formation of ER-derived membrane vesicles where the viral replication takes place. Also plays a role in the inhibition of host RLR-induced interferon-beta production at TANK-binding kinase 1/TBK1 level. Cooperatively with NS4A suppresses the Akt-mTOR pathway and leads to cellular dysregulation. Its function is as follows. Replicates the viral (+) and (-) RNA genome, and performs the capping of genomes in the cytoplasm. Methylates viral RNA cap at guanine N-7 and ribose 2'-O positions. Once sufficient NS5 is expressed, binds to the cap-proximal structure and inhibits further translation of the viral genome. Besides its role in RNA genome replication, also prevents the establishment of a cellular antiviral state by blocking the interferon-alpha/beta (IFN-alpha/beta) signaling pathway. Mechanistically, interferes with host kinases TBK1 and IKKE upstream of interferon regulatory factor 3/IRF3 to inhibit the RIG-I pathway. Also antagonizes type I interferon signaling by targeting STAT2 for degradation by the proteasome thereby preventing activation of JAK-STAT signaling pathway. Mechanistically, acts as a scaffold protein to connect host ZSWIM8/CUL3 ligase complex and STAT2, leading to STAT2 degradation. Within the host nucleus, disrupts host SUMO1 and STAT2 co-localization with PML, resulting in PML degradation. May also reduce immune responses by preventing the recruitment of the host PAF1 complex to interferon-responsive genes. The protein is Genome polyprotein of Aedes aegypti (Yellowfever mosquito).